The chain runs to 113 residues: ATP-dependent Clp protease adapter protein ClpS (113 aa).

It belongs to the ClpS family. As to quaternary structure, binds to the N-terminal domain of the chaperone ClpA.

Involved in the modulation of the specificity of the ClpAP-mediated ATP-dependent protein degradation. The chain is ATP-dependent Clp protease adapter protein ClpS from Leptospira biflexa serovar Patoc (strain Patoc 1 / Ames).